The primary structure comprises 128 residues: Large ribosomal subunit protein uL18 (128 aa).

It belongs to the universal ribosomal protein uL18 family. As to quaternary structure, part of the 50S ribosomal subunit; part of the 5S rRNA/L5/L18/L25 subcomplex. Contacts the 5S and 23S rRNAs.

In terms of biological role, this is one of the proteins that bind and probably mediate the attachment of the 5S RNA into the large ribosomal subunit, where it forms part of the central protuberance. The chain is Large ribosomal subunit protein uL18 from Acidothermus cellulolyticus (strain ATCC 43068 / DSM 8971 / 11B).